A 445-amino-acid polypeptide reads, in one-letter code: Xylose isomerase (445 aa).

Catalysis depends on residues His-109 and Asp-112. Mg(2+) is bound by residues Glu-240, Glu-276, His-279, Asp-304, Asp-315, Asp-317, and Asp-347.

Belongs to the xylose isomerase family. Homotetramer. Mg(2+) is required as a cofactor.

It localises to the cytoplasm. It carries out the reaction alpha-D-xylose = alpha-D-xylulofuranose. In Xanthomonas oryzae pv. oryzae (strain MAFF 311018), this protein is Xylose isomerase.